The primary structure comprises 101 residues: MANVTVTFTITEFCLHTGISEEELNEIVGLGVVEPREIQETTWVFDDHAAIVVQRAVRLRHELALDWPGIAVALTLMDDIAHLKQENRLLRQRLSRFVAHP.

Belongs to the CbpM family.

Its function is as follows. Interacts with CbpA and inhibits both the DnaJ-like co-chaperone activity and the DNA binding activity of CbpA. Together with CbpA, modulates the activity of the DnaK chaperone system. Does not inhibit the co-chaperone activity of DnaJ. In Escherichia coli (strain K12 / MC4100 / BW2952), this protein is Chaperone modulatory protein CbpM.